Reading from the N-terminus, the 835-residue chain is Transcription intermediary factor 1-beta (835 aa).

The segment covering M1–S19 has biased composition (low complexity). A disordered region spans residues M1–S49. A2 is modified (N-acetylalanine). Phosphoserine is present on residues S19 and S26. K31 is covalently cross-linked (Glycyl lysine isopeptide (Lys-Gly) (interchain with G-Cter in SUMO2)). The segment covering A35–S49 has biased composition (low complexity). Position 50 is a phosphoserine (S50). An RING-type zinc finger spans residues C65–K121. Residues C65–L376 form an RBCC domain region. K127 participates in a covalent cross-link: Glycyl lysine isopeptide (Lys-Gly) (interchain with G-Cter in SUMO2). S138 is modified (phosphoserine). Residues D148 to T195 form a B box-type 1; atypical zinc finger. C153, C156, C177, and H181 together coordinate Zn(2+). A Glycyl lysine isopeptide (Lys-Gly) (interchain with G-Cter in SUMO2) cross-link involves residue K199. Residues E204–L245 form a B box-type 2 zinc finger. 4 residues coordinate Zn(2+): C209, H212, C232, and H237. The tract at residues E246 to L376 is leucine zipper alpha helical coiled-coil region. The segment at D247–L376 is interaction with MAGEC2. Residues K254 and K261 each participate in a glycyl lysine isopeptide (Lys-Gly) (interchain with G-Cter in SUMO2) cross-link. K266 is modified (N6-acetyllysine). A Glycyl lysine isopeptide (Lys-Gly) (interchain with G-Cter in SUMO2) cross-link involves residue K272. N6-acetyllysine; alternate is present on K304. K304 is covalently cross-linked (Glycyl lysine isopeptide (Lys-Gly) (interchain with G-Cter in SUMO2); alternate). K319 is covalently cross-linked (Glycyl lysine isopeptide (Lys-Gly) (interchain with G-Cter in SUMO2)). N6-acetyllysine is present on K340. K366 participates in a covalent cross-link: Glycyl lysine isopeptide (Lys-Gly) (interchain with G-Cter in SUMO2). The segment at K366 to F370 is involved in binding PPP1CA. An N6-acetyllysine; alternate modification is found at K377. Residue K377 forms a Glycyl lysine isopeptide (Lys-Gly) (interchain with G-Cter in SUMO2); alternate linkage. K377 is covalently cross-linked (Glycyl lysine isopeptide (Lys-Gly) (interchain with G-Cter in SUMO1); alternate). A Glycyl lysine isopeptide (Lys-Gly) (interchain with G-Cter in SUMO2) cross-link involves residue K407. The segment at E411 to G480 is disordered. S417 carries the phosphoserine modification. Residue K434 forms a Glycyl lysine isopeptide (Lys-Gly) (interchain with G-Cter in SUMO2) linkage. The segment covering K434–M443 has biased composition (polar residues). Phosphoserine occurs at positions 437, 439, and 453. Residue K469 forms a Glycyl lysine isopeptide (Lys-Gly) (interchain with G-Cter in SUMO2); alternate linkage. K469 participates in a covalent cross-link: Glycyl lysine isopeptide (Lys-Gly) (interchain with G-Cter in SUMO1); alternate. The residue at position 470 (R470) is a Citrulline. Position 471 is a phosphoserine (S471). Citrulline is present on R472. S473, S479, and S489 each carry phosphoserine. The tract at residues G476–T513 is HP1 box. The PxVxL motif motif lies at L481–D494. T498 carries the phosphothreonine modification. S501 carries the post-translational modification Phosphoserine. K507 is covalently cross-linked (Glycyl lysine isopeptide (Lys-Gly) (interchain with G-Cter in SUMO2)). T541 is modified (phosphothreonine). A Glycyl lysine isopeptide (Lys-Gly) (interchain with G-Cter in SUMO2); alternate cross-link involves residue K554. K554 is covalently cross-linked (Glycyl lysine isopeptide (Lys-Gly) (interchain with G-Cter in SUMO); alternate). K575 is covalently cross-linked (Glycyl lysine isopeptide (Lys-Gly) (interchain with G-Cter in SUMO2)). The segment at G584–P618 is disordered. S594 carries the post-translational modification Phosphoserine. The segment at A625–L672 adopts a PHD-type zinc-finger fold. K676 is covalently cross-linked (Glycyl lysine isopeptide (Lys-Gly) (interchain with G-Cter in SUMO)). Residues S683, S689, and S697 each carry the phosphoserine modification. Residues K695 to A799 form the Bromo domain. K750 is covalently cross-linked (Glycyl lysine isopeptide (Lys-Gly) (interchain with G-Cter in SUMO2); alternate). A Glycyl lysine isopeptide (Lys-Gly) (interchain with G-Cter in SUMO1); alternate cross-link involves residue K750. A Glycyl lysine isopeptide (Lys-Gly) (interchain with G-Cter in SUMO); alternate cross-link involves residue K750. The residue at position 752 (S752) is a Phosphoserine. A Phosphotyrosine modification is found at Y755. S757 is subject to Phosphoserine. An N6-acetyllysine; alternate mark is found at K770, K774, and K779. Glycyl lysine isopeptide (Lys-Gly) (interchain with G-Cter in SUMO2); alternate cross-links involve residues K770, K774, and K779. K779 is covalently cross-linked (Glycyl lysine isopeptide (Lys-Gly) (interchain with G-Cter in SUMO1); alternate). S784 carries the post-translational modification Phosphoserine. Residue K804 forms a Glycyl lysine isopeptide (Lys-Gly) (interchain with G-Cter in SUMO2); alternate linkage. A Glycyl lysine isopeptide (Lys-Gly) (interchain with G-Cter in SUMO); alternate cross-link involves residue K804. The tract at residues M815–P835 is disordered. Position 824 is a phosphoserine; by ATM and ATR and dsDNA kinase (S824).

This sequence belongs to the TRIM/RBCC family. In terms of assembly, interacts with SETX. Oligomer; the RBCC domain homotrimerizes and interacts with one molecule of KRAB to form the KRAB-KAP1 corepressor complex. Binding to a KRAB domain is an absolute requirement for silencing gene expression. Interacts with CEBPB and NR3C1. Interacts with a number of KRAB-ZFP proteins including ZNF10, ZFP53, ZFP68, ZNF382 and ZNF256. Interacts with NCOR1, NR3C1 and CHD3. Interacts with CEBPB (via the RING-type and PHD-type zinc fingers). Component of a ternary complex that includes TRIM28, a HP1 protein (CBX1, CBX3 OR CBX5), a KRAB domain-containing protein, and DNA. Interacts with CBX5 (via the PxVxL motif); the interaction occurs in interphase nuclei and competes for binding POGZ. Interacts with POGZ; the interaction competes for interaction with CBX5. Interacts with SETDB1; the interaction is enhanced by KAP1 sumoylation, stimulates SETDB1 histone methyltransferase activity and gene silencing. Interacts (via the PHD-type zinc finger) with UBE2I; the interaction is required for sumoylation and repressor activity. Component of the TRIM28/KAP1-ERBB4-MDM2 complex involved in connecting growth factor and DNA damage responses. Interacts directly with ERBB4; the interaction represses ERBB4-mediated transcription activity. Interacts with MDM2; the interaction contributes to p53/TP53 inactivation. Component of the TRIM28/KAP1-MDM2-p53/TP53; involved in regulating p53/TP53 stabilization and activity. Interacts (via the leucine zipper alpha helical coiled-coil) with E2F1 (central region); the interaction inhibits E2F1 acetylation and transcriptional activity. Interacts with PPP1CA; the interaction dephosphorylates TRIM28 at Ser-824 and forms a complex at the p21 promoter site. Interacts with PPP1CB; the interaction is weak but is increased on dephosphorylation at Ser-824. Interacts with FES/FPS. Interacts with SMARCAD1. Interacts with, and sumoylates IRF7. Interacts with MAGEC2. Part of a complex composed of TRIM28, HDAC1, HDAC2 and EHMT2. Interacts with AICDA. Interacts (via the RBCC domain) with KOX1 (via the KRAB domain), ZNF268 (via the KRAB domain) and ZNF300 (via the KRAB domain); the interactions increase KOX1, ZNF268 and ZNF300 nuclear localization activities. The large PER complex involved in the histone methylation is composed of at least PER2, CBX3, TRIM28, SUV39H1 and/or SUV39H2; CBX3 mediates the formation of the complex. Interacts with isoform 2 of ZFP90. Forms a complex with FOXP3 in the presence of isoform 2 of ZFP90. Interacts with NR4A3; the interactions potentiates NR4A3 activity on NurRE promoter. Interacts (unphosphorylated or phosphorylated form) with ZBTB1 (via BTB domain). Probably part of a corepressor complex containing ZNF304, TRIM28, SETDB1 and DNMT1. Interacts with ATRX. Forms a complex with ATRX, SETDB1 and ZNF274. Interacts with ZFP568; the interaction mediates ZFP568 transcriptional repression activity. Interacts with RRP1B. Interacts with CRY1. Interacts with ZNF263; recruited to the SIX3 promoter along with other proteins involved in chromatin modification and transcriptional corepression where it contributes to transcriptional repression. Interacts with CYREN (via XLF motif). Interacts with TRIM17; this interaction prevents TRIM28 activity. Interacts with ZNF746. Interacts with PHF13. Interacts with ZNF354C. Interacts with ZNF432; the interaction is independent of PARP1. As to quaternary structure, (Microbial infection) Interacts with herpes virus 8 protein LANA1; this interaction facilitates establishment of viral latency. In terms of processing, ATM-induced phosphorylation on Ser-824 represses sumoylation leading to the de-repression of expression of a subset of genes involved in cell cycle control and apoptosis in response to genotoxic stress. Dephosphorylation by the phosphatases, PPP1CA and PP1CB forms, allows sumoylation and expression of TRIM28 target genes. Post-translationally, sumoylation/desumoylation events regulate TRIM28-mediated transcriptional repression. Sumoylation is required for interaction with CHD3 and SETDB1 and the corepressor activity. Represses and is repressed by Ser-824 phosphorylation. Enhances the TRIM28 corepressor activity, inhibiting transcriptional activity of a number of genes including GADD45A and CDKN1A/p21. Lys-554, Lys-779 and Lys-804 are the major sites of sumoylation. In response to Dox-induced DNA damage, enhanced phosphorylation on Ser-824 prevents sumoylation and allows de-repression of CDKN1A/p21. Auto-ubiquitinated; enhanced by MAGEA2 and MAGEC2. In terms of processing, citrullinated by PADI4. Post-translationally, ADP-ribosylated by SIRT6, promoting TRIM28/KAP1 interaction with CBX5, thereby contributing to the packaging of LINE-1 retrotransposon elements into transcriptionally repressive heterochromatin. In terms of tissue distribution, expressed in all tissues tested including spleen, thymus, prostate, testis, ovary, small intestine, colon and peripheral blood leukocytes.

The protein resides in the nucleus. The enzyme catalyses S-ubiquitinyl-[E2 ubiquitin-conjugating enzyme]-L-cysteine + [acceptor protein]-L-lysine = [E2 ubiquitin-conjugating enzyme]-L-cysteine + N(6)-ubiquitinyl-[acceptor protein]-L-lysine.. Its pathway is protein modification; protein sumoylation. Functionally, nuclear corepressor for KRAB domain-containing zinc finger proteins (KRAB-ZFPs). Mediates gene silencing by recruiting CHD3, a subunit of the nucleosome remodeling and deacetylation (NuRD) complex, and SETDB1 (which specifically methylates histone H3 at 'Lys-9' (H3K9me)) to the promoter regions of KRAB target genes. Enhances transcriptional repression by coordinating the increase in H3K9me, the decrease in histone H3 'Lys-9 and 'Lys-14' acetylation (H3K9ac and H3K14ac, respectively) and the disposition of HP1 proteins to silence gene expression. Recruitment of SETDB1 induces heterochromatinization. May play a role as a coactivator for CEBPB and NR3C1 in the transcriptional activation of ORM1. Also a corepressor for ERBB4. Inhibits E2F1 activity by stimulating E2F1-HDAC1 complex formation and inhibiting E2F1 acetylation. May serve as a partial backup to prevent E2F1-mediated apoptosis in the absence of RB1. Important regulator of CDKN1A/p21(CIP1). Has E3 SUMO-protein ligase activity toward itself via its PHD-type zinc finger. Also specifically sumoylates IRF7, thereby inhibiting its transactivation activity. Ubiquitinates p53/TP53 leading to its proteasomal degradation; the function is enhanced by MAGEC2 and MAGEA2, and possibly MAGEA3 and MAGEA6. Mediates the nuclear localization of KOX1, ZNF268 and ZNF300 transcription factors. In association with isoform 2 of ZFP90, is required for the transcriptional repressor activity of FOXP3 and the suppressive function of regulatory T-cells (Treg). Probably forms a corepressor complex required for activated KRAS-mediated promoter hypermethylation and transcriptional silencing of tumor suppressor genes (TSGs) or other tumor-related genes in colorectal cancer (CRC) cells. Required to maintain a transcriptionally repressive state of genes in undifferentiated embryonic stem cells (ESCs). In ESCs, in collaboration with SETDB1, is also required for H3K9me3 and silencing of endogenous and introduced retroviruses in a DNA-methylation independent-pathway. Associates at promoter regions of tumor suppressor genes (TSGs) leading to their gene silencing. The SETDB1-TRIM28-ZNF274 complex may play a role in recruiting ATRX to the 3'-exons of zinc-finger coding genes with atypical chromatin signatures to establish or maintain/protect H3K9me3 at these transcriptionally active regions. Its function is as follows. (Microbial infection) Plays a critical role in the shutdown of lytic gene expression during the early stage of herpes virus 8 primary infection. This inhibition is mediated through interaction with herpes virus 8 protein LANA1. The protein is Transcription intermediary factor 1-beta of Homo sapiens (Human).